Reading from the N-terminus, the 481-residue chain is Ribulose bisphosphate carboxylase large chain (481 aa).

Residues 1 to 2 constitute a propeptide that is removed on maturation; the sequence is MS. N-acetylproline is present on Pro-3. At Lys-14 the chain carries N6,N6,N6-trimethyllysine. Asn-123 and Thr-173 together coordinate substrate. Lys-175 serves as the catalytic Proton acceptor. Lys-177 serves as a coordination point for substrate. 3 residues coordinate Mg(2+): Lys-201, Asp-203, and Glu-204. Lys-201 is modified (N6-carboxylysine). Residue His-294 is the Proton acceptor of the active site. Residues Arg-295, His-327, and Ser-379 each coordinate substrate.

Belongs to the RuBisCO large chain family. Type I subfamily. Heterohexadecamer of 8 large chains and 8 small chains; disulfide-linked. The disulfide link is formed within the large subunit homodimers. It depends on Mg(2+) as a cofactor. The disulfide bond which can form in the large chain dimeric partners within the hexadecamer appears to be associated with oxidative stress and protein turnover.

The protein resides in the plastid. It carries out the reaction 2 (2R)-3-phosphoglycerate + 2 H(+) = D-ribulose 1,5-bisphosphate + CO2 + H2O. The enzyme catalyses D-ribulose 1,5-bisphosphate + O2 = 2-phosphoglycolate + (2R)-3-phosphoglycerate + 2 H(+). Functionally, ruBisCO catalyzes two reactions: the carboxylation of D-ribulose 1,5-bisphosphate, the primary event in carbon dioxide fixation, as well as the oxidative fragmentation of the pentose substrate in the photorespiration process. Both reactions occur simultaneously and in competition at the same active site. This is Ribulose bisphosphate carboxylase large chain from Cuscuta obtusiflora (Peruvian dodder).